The chain runs to 343 residues: Protein RecA (343 aa).

Belongs to the RecA family.

Its subcellular location is the cytoplasm. In terms of biological role, can catalyze the hydrolysis of ATP in the presence of single-stranded DNA, the ATP-dependent uptake of single-stranded DNA by duplex DNA, and the ATP-dependent hybridization of homologous single-stranded DNAs. It interacts with LexA causing its activation and leading to its autocatalytic cleavage. In Coxiella burnetii (strain RSA 493 / Nine Mile phase I), this protein is Protein RecA.